Consider the following 338-residue polypeptide: Phenylalanine--tRNA ligase alpha subunit (338 aa).

Position 252 (E252) interacts with Mg(2+).

It belongs to the class-II aminoacyl-tRNA synthetase family. Phe-tRNA synthetase alpha subunit type 1 subfamily. Tetramer of two alpha and two beta subunits. Mg(2+) serves as cofactor.

The protein resides in the cytoplasm. It carries out the reaction tRNA(Phe) + L-phenylalanine + ATP = L-phenylalanyl-tRNA(Phe) + AMP + diphosphate + H(+). In Aquifex aeolicus (strain VF5), this protein is Phenylalanine--tRNA ligase alpha subunit (pheS).